The chain runs to 328 residues: Ferredoxin--NADP reductase 1 (328 aa).

Residues Asp28, Gln36, Tyr41, Ala81, Ile116, Asp277, and Ser320 each coordinate FAD.

The protein belongs to the ferredoxin--NADP reductase type 2 family. Homodimer. FAD is required as a cofactor.

The enzyme catalyses 2 reduced [2Fe-2S]-[ferredoxin] + NADP(+) + H(+) = 2 oxidized [2Fe-2S]-[ferredoxin] + NADPH. This is Ferredoxin--NADP reductase 1 from Sulfolobus acidocaldarius (strain ATCC 33909 / DSM 639 / JCM 8929 / NBRC 15157 / NCIMB 11770).